The following is a 370-amino-acid chain: tRNA-specific 2-thiouridylase MnmA (370 aa).

ATP contacts are provided by residues 24–31 (AMSGGVDS) and leucine 50. Cysteine 118 serves as the catalytic Nucleophile. A disulfide bridge connects residues cysteine 118 and cysteine 214. Glycine 142 contributes to the ATP binding site. The tract at residues 164–166 (KDQ) is interaction with tRNA. The Cysteine persulfide intermediate role is filled by cysteine 214.

The protein belongs to the MnmA/TRMU family.

The protein resides in the cytoplasm. It carries out the reaction S-sulfanyl-L-cysteinyl-[protein] + uridine(34) in tRNA + AH2 + ATP = 2-thiouridine(34) in tRNA + L-cysteinyl-[protein] + A + AMP + diphosphate + H(+). In terms of biological role, catalyzes the 2-thiolation of uridine at the wobble position (U34) of tRNA, leading to the formation of s(2)U34. The sequence is that of tRNA-specific 2-thiouridylase MnmA from Ehrlichia ruminantium (strain Gardel).